A 378-amino-acid chain; its full sequence is Outer membrane protein (378 aa).

The N-terminal stretch at 1–22 (MRLRTALLATTLMAAAPVAANA) is a signal peptide. In terms of domain architecture, OmpA-like spans 258–378 (PPAPTPARTY…QNRRVEIILH (121 aa)).

The protein localises to the cell outer membrane. Growth enhancer. The polypeptide is Outer membrane protein (Gluconacetobacter diazotrophicus (strain ATCC 49037 / DSM 5601 / CCUG 37298 / CIP 103539 / LMG 7603 / PAl5)).